A 243-amino-acid polypeptide reads, in one-letter code: Proteasome subunit beta (243 aa).

The tract at residues 1–46 is disordered; the sequence is MFNPNNGSEFARNRARLDDTPNPYEPEVGSLPEGDRSQAGSDTVNK. Positions 1–48 are cleaved as a propeptide — removed in mature form; by autocatalysis; that stretch reads MFNPNNGSEFARNRARLDDTPNPYEPEVGSLPEGDRSQAGSDTVNKTG. The active-site Nucleophile is Thr-49.

This sequence belongs to the peptidase T1B family. As to quaternary structure, the 20S proteasome core is composed of 14 alpha and 14 beta subunits that assemble into four stacked heptameric rings, resulting in a barrel-shaped structure. The two inner rings, each composed of seven catalytic beta subunits, are sandwiched by two outer rings, each composed of seven alpha subunits. The catalytic chamber with the active sites is on the inside of the barrel. Has a gated structure, the ends of the cylinder being occluded by the N-termini of the alpha-subunits. Is capped at one or both ends by the proteasome regulatory ATPase, PAN.

Its subcellular location is the cytoplasm. The enzyme catalyses Cleavage of peptide bonds with very broad specificity.. The formation of the proteasomal ATPase PAN-20S proteasome complex, via the docking of the C-termini of PAN into the intersubunit pockets in the alpha-rings, triggers opening of the gate for substrate entry. Interconversion between the open-gate and close-gate conformations leads to a dynamic regulation of the 20S proteasome proteolysis activity. In terms of biological role, component of the proteasome core, a large protease complex with broad specificity involved in protein degradation. In Halobacterium salinarum (strain ATCC 29341 / DSM 671 / R1), this protein is Proteasome subunit beta.